The following is a 122-amino-acid chain: Large ribosomal subunit protein uL14 (122 aa).

It belongs to the universal ribosomal protein uL14 family. As to quaternary structure, part of the 50S ribosomal subunit. Forms a cluster with proteins L3 and L19. In the 70S ribosome, L14 and L19 interact and together make contacts with the 16S rRNA in bridges B5 and B8.

Its function is as follows. Binds to 23S rRNA. Forms part of two intersubunit bridges in the 70S ribosome. The chain is Large ribosomal subunit protein uL14 from Kocuria rhizophila (strain ATCC 9341 / DSM 348 / NBRC 103217 / DC2201).